The sequence spans 239 residues: Small ribosomal subunit protein uS3c (239 aa).

One can recognise a KH type-2 domain in the interval 43 to 139 (IKNYIQKNRK…RLNIGIEKVK (97 aa)).

This sequence belongs to the universal ribosomal protein uS3 family. Part of the 30S ribosomal subunit.

It is found in the plastid. Its subcellular location is the chloroplast. This chain is Small ribosomal subunit protein uS3c (rps3), found in Oryza nivara (Indian wild rice).